The primary structure comprises 483 residues: UDP-N-acetylmuramate--L-alanine ligase (483 aa).

An ATP-binding site is contributed by 112-118; sequence GTHGKTT.

This sequence belongs to the MurCDEF family.

It is found in the cytoplasm. It catalyses the reaction UDP-N-acetyl-alpha-D-muramate + L-alanine + ATP = UDP-N-acetyl-alpha-D-muramoyl-L-alanine + ADP + phosphate + H(+). It participates in cell wall biogenesis; peptidoglycan biosynthesis. Functionally, cell wall formation. The chain is UDP-N-acetylmuramate--L-alanine ligase from Ralstonia pickettii (strain 12J).